The primary structure comprises 421 residues: Heterogeneous nuclear ribonucleoprotein 27C (421 aa).

RRM domains lie at 7-88 and 96-173; these read GKLF…RTLQ and YKVF…KAEP. 2 disordered regions span residues 171 to 191 and 240 to 373; these read AEPR…GGAY and GTSP…SEYD. Phosphoserine is present on Ser-177. The span at 240–250 shows a compositional bias: polar residues; sequence GTSPQQQQYGY. Residues 264–273 show a composition bias toward pro residues; the sequence is PPGPQGPPPQ. A compositionally biased stretch (polar residues) spans 275–284; sequence SNYAGPQQTQ. The segment covering 293–302 has biased composition (low complexity); that stretch reads NSTSTGAPSG. Residues Ser-366, Ser-368, and Ser-370 each carry the phosphoserine modification. Phosphotyrosine is present on Tyr-372. Ser-379 bears the Phosphoserine mark. The tract at residues 392–421 is disordered; it reads EGASNYGAGPRSAYGNDSSTQPPYATSQAV. Residues 406-421 show a composition bias toward polar residues; the sequence is GNDSSTQPPYATSQAV.

In terms of assembly, interacts with sqd; the interaction is RNA-dependent and may be specific for sqd isoform A/sqdA. Interacts with otu; the interaction is RNA-independent.

It is found in the nucleus. The protein localises to the cytoplasm. Functionally, this protein is a component of ribonucleosomes. Could be needed to organize a concentration gradient of a dorsalizing morphogen (Dm) originating in the germinal vesicle. Interacts with grk mRNA (via 3' UTR) and involved in its localization to the dorsal anterior region of the oocyte during dorsal-ventral axis determination; may function as a ribonuclear protein complex together with sqd and otu. Required for polytene chromosome dispersal in nurse cells during oogenesis. May be involved in the regulation of splicing. The chain is Heterogeneous nuclear ribonucleoprotein 27C from Drosophila melanogaster (Fruit fly).